We begin with the raw amino-acid sequence, 226 residues long: UPF0177 protein YbdJ (226 aa).

5 helical membrane passes run 16 to 36 (LLLL…LGIF), 43 to 63 (FAFN…IVIA), 81 to 101 (LLFI…AHHL), 169 to 189 (FAWV…ISLV), and 206 to 226 (LHSS…FWVF).

Belongs to the UPF0177 family.

Its subcellular location is the cell membrane. The sequence is that of UPF0177 protein YbdJ (ybdJ) from Lactococcus lactis subsp. lactis (strain IL1403) (Streptococcus lactis).